A 325-amino-acid polypeptide reads, in one-letter code: tRNA dimethylallyltransferase (325 aa).

12 to 19 (GPTASGKT) serves as a coordination point for ATP. 14–19 (TASGKT) contributes to the substrate binding site. Interaction with substrate tRNA regions lie at residues 37–40 (DSAL), 161–165 (QRIHR), and 244–249 (RCVGYR).

Belongs to the IPP transferase family. As to quaternary structure, monomer. The cofactor is Mg(2+).

It catalyses the reaction adenosine(37) in tRNA + dimethylallyl diphosphate = N(6)-dimethylallyladenosine(37) in tRNA + diphosphate. In terms of biological role, catalyzes the transfer of a dimethylallyl group onto the adenine at position 37 in tRNAs that read codons beginning with uridine, leading to the formation of N6-(dimethylallyl)adenosine (i(6)A). This chain is tRNA dimethylallyltransferase, found in Chromobacterium violaceum (strain ATCC 12472 / DSM 30191 / JCM 1249 / CCUG 213 / NBRC 12614 / NCIMB 9131 / NCTC 9757 / MK).